The primary structure comprises 394 residues: Glycogen synthase kinase 1 (394 aa).

Residues 35–318 (YTQCKIVGNG…AIDAMVHPFF (284 aa)) enclose the Protein kinase domain. Residues 41–49 (VGNGSFGVV) and lysine 64 each bind ATP.

It belongs to the protein kinase superfamily. CMGC Ser/Thr protein kinase family. GSK-3 subfamily.

The protein localises to the cytoplasm. It catalyses the reaction L-seryl-[protein] + ATP = O-phospho-L-seryl-[protein] + ADP + H(+). Protein kinase that acts downstream of the MPS1 MAPK cascade as a highly conservative signal modulator that dictates growth, conidiation and pathogenicity. Phosphorylates HAT1 at 'Ser-8' to block its translocation from the nucleus to the cytoplasm where HAT1 positively regulates appressorium development and pathogenicity. This chain is Glycogen synthase kinase 1, found in Pyricularia oryzae (Rice blast fungus).